A 420-amino-acid chain; its full sequence is MKDLFEHIYANKGSIGRWSDHAEGYYVFPKLEGELGPHMKFQGKEILNWSINDYLGLANHPEVRKVDAEAAAEYGAAYPMGARMMSGHTTMHEELEKRLAKFVHKEASYLLNFGYQGMVSIIDALVTKNDVIVYDVDAHACIIDGVRLHFGKRYTYQHNDMESFEKNLERAAKLAETTGGGILVISEGVFGMRGEQGKLKEIVALKKKYPFRLLVDDAHGFGTLGPRGEGTGVHQGVQDEIDVYFSTFAKSMAGIGAFVAGNAKVVDYLKYNLRSQMFAKSLPMIYVKGALKRLEMMETMPELQQKLWDNVNRLQNGLKERGFNIGNTNTCVTPVFLHGSIPEAMAMVNDLREHYGIFLSIVVYPVIPKGMILLRIIPTASHSKEDIDRTLEAFSAIREKLETGVYRAINAELTKEMGDM.

Residues 114 to 115 (GY), H219, T247, and A249 each bind pyridoxal 5'-phosphate. K250 carries the N6-(pyridoxal phosphate)lysine modification.

This sequence belongs to the class-II pyridoxal-phosphate-dependent aminotransferase family. Requires pyridoxal 5'-phosphate as cofactor.

It catalyses the reaction isopentadecanoyl-CoA + L-cysteate + H(+) = 3-oxocapnine + CO2 + CoA. It participates in lipid metabolism. In terms of biological role, transferase involved in the biosynthesis of capnine, a sulfonolipid present in the outer membrane of gliding Bacteroidetes and essential for gliding motility. Catalyzes the formation of 3-dehydrocapnine from cysteate and isopentadecanoyl-CoA (13-methyl-myristoyl-CoA). In vitro, products are also detected when 13-methyl-myristic acid is substituted with tridecylic acid, myristic acid, pentadecanoic acid or palmitic acid. This chain is Cysteate-C-fatty acyltransferase, found in Capnocytophaga ochracea (strain ATCC 27872 / DSM 7271 / CCUG 9716 / JCM 12966 / NCTC 12371 / SS31 / VPI 2845) (Bacteroides ochraceus).